The following is a 347-amino-acid chain: GMP reductase (347 aa).

108–131 is a binding site for NADP(+); sequence ADFQKTKDIMALTEDLIFICIDIA. The K(+) site is built by glycine 181 and glycine 183. Cysteine 186 functions as the Thioimidate intermediate in the catalytic mechanism. 216–239 provides a ligand contact to NADP(+); sequence IIGDGGCSCAGDVSKAFGGGADFV.

Belongs to the IMPDH/GMPR family. GuaC type 1 subfamily. In terms of assembly, homotetramer.

It carries out the reaction IMP + NH4(+) + NADP(+) = GMP + NADPH + 2 H(+). In terms of biological role, catalyzes the irreversible NADPH-dependent deamination of GMP to IMP. It functions in the conversion of nucleobase, nucleoside and nucleotide derivatives of G to A nucleotides, and in maintaining the intracellular balance of A and G nucleotides. The sequence is that of GMP reductase from Photobacterium profundum (strain SS9).